We begin with the raw amino-acid sequence, 220 residues long: UPF0319 protein Ent638_1476 (220 aa).

An N-terminal signal peptide occupies residues methionine 1–alanine 20.

Belongs to the UPF0319 family.

This is UPF0319 protein Ent638_1476 from Enterobacter sp. (strain 638).